A 372-amino-acid chain; its full sequence is N-methyl-L-tryptophan oxidase (372 aa).

4-34 (DLIIIGSGSVGAAAGYYATRAGLNVLMTDAH) serves as a coordination point for FAD. Residue C308 is modified to S-8alpha-FAD cysteine.

Belongs to the MSOX/MTOX family. MTOX subfamily. As to quaternary structure, monomer. FAD serves as cofactor.

It carries out the reaction N(alpha)-methyl-L-tryptophan + O2 + H2O = L-tryptophan + formaldehyde + H2O2. Catalyzes the oxidative demethylation of N-methyl-L-tryptophan. The protein is N-methyl-L-tryptophan oxidase of Escherichia coli O81 (strain ED1a).